The primary structure comprises 550 residues: Dihydroxy-acid dehydratase (550 aa).

Aspartate 78 contributes to the Mg(2+) binding site. Cysteine 119 is a [2Fe-2S] cluster binding site. The Mg(2+) site is built by aspartate 120 and lysine 121. An N6-carboxylysine modification is found at lysine 121. Cysteine 191 contacts [2Fe-2S] cluster. Glutamate 440 provides a ligand contact to Mg(2+). The Proton acceptor role is filled by serine 466.

The protein belongs to the IlvD/Edd family. In terms of assembly, homodimer. Requires [2Fe-2S] cluster as cofactor. Mg(2+) is required as a cofactor.

It carries out the reaction (2R)-2,3-dihydroxy-3-methylbutanoate = 3-methyl-2-oxobutanoate + H2O. The enzyme catalyses (2R,3R)-2,3-dihydroxy-3-methylpentanoate = (S)-3-methyl-2-oxopentanoate + H2O. It participates in amino-acid biosynthesis; L-isoleucine biosynthesis; L-isoleucine from 2-oxobutanoate: step 3/4. Its pathway is amino-acid biosynthesis; L-valine biosynthesis; L-valine from pyruvate: step 3/4. Functionally, functions in the biosynthesis of branched-chain amino acids. Catalyzes the dehydration of (2R,3R)-2,3-dihydroxy-3-methylpentanoate (2,3-dihydroxy-3-methylvalerate) into 2-oxo-3-methylpentanoate (2-oxo-3-methylvalerate) and of (2R)-2,3-dihydroxy-3-methylbutanoate (2,3-dihydroxyisovalerate) into 2-oxo-3-methylbutanoate (2-oxoisovalerate), the penultimate precursor to L-isoleucine and L-valine, respectively. This chain is Dihydroxy-acid dehydratase, found in Methanococcus aeolicus (strain ATCC BAA-1280 / DSM 17508 / OCM 812 / Nankai-3).